A 337-amino-acid chain; its full sequence is AP2/ERF and B3 domain-containing transcription factor At1g50680 (337 aa).

A DNA-binding region (AP2/ERF) is located at residues 27–84 (KYKGVVQQQNGHWGAQIYADHKRIWLGTFKSADEAATAYDSASIKLRSFDANSHRNFP). A DNA-binding region (TF-B3) is located at residues 157–271 (FQKELTPSDV…VKTLEGQRKN (115 aa)).

The protein belongs to the AP2/ERF transcription factor family. RAV subfamily.

The protein localises to the nucleus. In terms of biological role, probably acts as a transcriptional activator. Binds to the GCC-box pathogenesis-related promoter element. May be involved in the regulation of gene expression by stress factors and by components of stress signal transduction pathways. This Arabidopsis thaliana (Mouse-ear cress) protein is AP2/ERF and B3 domain-containing transcription factor At1g50680.